Here is a 152-residue protein sequence, read N- to C-terminus: Protein SprT-like (152 aa).

In terms of domain architecture, SprT-like spans 7-148 (QRLVEEVSLQ…GKCKGKLNLI (142 aa)). His-67 provides a ligand contact to Zn(2+). Glu-68 is a catalytic residue. His-71 lines the Zn(2+) pocket.

This sequence belongs to the SprT family. Zn(2+) serves as cofactor.

It localises to the cytoplasm. This Bacillus cereus (strain 03BB102) protein is Protein SprT-like.